Consider the following 125-residue polypeptide: Large ribosomal subunit protein bL12 (125 aa).

The protein belongs to the bacterial ribosomal protein bL12 family. In terms of assembly, homodimer. Part of the ribosomal stalk of the 50S ribosomal subunit. Forms a multimeric L10(L12)X complex, where L10 forms an elongated spine to which 2 to 4 L12 dimers bind in a sequential fashion. Binds GTP-bound translation factors.

In terms of biological role, forms part of the ribosomal stalk which helps the ribosome interact with GTP-bound translation factors. Is thus essential for accurate translation. This chain is Large ribosomal subunit protein bL12, found in Variovorax paradoxus (strain S110).